The primary structure comprises 293 residues: tRNA pseudouridine synthase B (293 aa).

Asp39 acts as the Nucleophile in catalysis.

Belongs to the pseudouridine synthase TruB family. Type 1 subfamily.

The catalysed reaction is uridine(55) in tRNA = pseudouridine(55) in tRNA. Responsible for synthesis of pseudouridine from uracil-55 in the psi GC loop of transfer RNAs. This chain is tRNA pseudouridine synthase B, found in Streptococcus mutans serotype c (strain ATCC 700610 / UA159).